A 235-amino-acid chain; its full sequence is MSSGRIAPLVFPAASQHTATVIFVHGLGDTGHGWASAVENWRRRQKMDEVKFILPHAPQIPISVNMGMRMPGWFDIKQLGGDVDSLIRNEDTEGIKLSQKYFHNLIQQEIDSGIVPERIVLGGFSQGGAMSLLAGLTCTSKLGGILGLSSWLLLSKTFADMVKPTDANRQTPVMMFHGEEDPIVPCERGKLSAELLKGLGYDVAWKTYPGMGHSAVPEELDEVEAFLRKQLPPKN.

Catalysis depends on charge relay system residues Ser-125, Asp-181, and His-213.

This sequence belongs to the AB hydrolase superfamily. AB hydrolase 2 family.

The protein resides in the cytoplasm. The protein localises to the nucleus. The enzyme catalyses S-hexadecanoyl-L-cysteinyl-[protein] + H2O = L-cysteinyl-[protein] + hexadecanoate + H(+). Hydrolyzes fatty acids from S-acylated cysteine residues in proteins with a strong preference for palmitoylated G-alpha proteins over other acyl substrates. Mediates the deacylation of G-alpha proteins such as GPA1 in vivo, but has weak or no activity toward palmitoylated Ras proteins. Has weak lysophospholipase activity in vitro; however such activity may not exist in vivo. In Gibberella zeae (strain ATCC MYA-4620 / CBS 123657 / FGSC 9075 / NRRL 31084 / PH-1) (Wheat head blight fungus), this protein is Acyl-protein thioesterase 1.